We begin with the raw amino-acid sequence, 148 residues long: Ribosome-binding factor A (148 aa).

The segment at 120–148 (AKAREGASYAGDADPYRTAEPDADDAPRA) is disordered. A compositionally biased stretch (basic and acidic residues) spans 133-148 (DPYRTAEPDADDAPRA).

The protein belongs to the RbfA family. In terms of assembly, monomer. Binds 30S ribosomal subunits, but not 50S ribosomal subunits or 70S ribosomes.

It is found in the cytoplasm. Functionally, one of several proteins that assist in the late maturation steps of the functional core of the 30S ribosomal subunit. Associates with free 30S ribosomal subunits (but not with 30S subunits that are part of 70S ribosomes or polysomes). Required for efficient processing of 16S rRNA. May interact with the 5'-terminal helix region of 16S rRNA. The polypeptide is Ribosome-binding factor A (Micrococcus luteus (strain ATCC 4698 / DSM 20030 / JCM 1464 / CCM 169 / CCUG 5858 / IAM 1056 / NBRC 3333 / NCIMB 9278 / NCTC 2665 / VKM Ac-2230) (Micrococcus lysodeikticus)).